A 788-amino-acid chain; its full sequence is Endonuclease MutS2 (788 aa).

Residue 335 to 342 coordinates ATP; the sequence is GPNTGGKT. The segment at 688 to 708 is disordered; that stretch reads VKSASKTKKRSGGTSITKQSA. Residues 699-708 show a composition bias toward polar residues; that stretch reads GGTSITKQSA. The Smr domain maps to 713 to 788; sequence LDLRGVRVEE…GHGVTIIELK (76 aa).

This sequence belongs to the DNA mismatch repair MutS family. MutS2 subfamily. As to quaternary structure, homodimer. Binds to stalled ribosomes, contacting rRNA.

In terms of biological role, endonuclease that is involved in the suppression of homologous recombination and thus may have a key role in the control of bacterial genetic diversity. Its function is as follows. Acts as a ribosome collision sensor, splitting the ribosome into its 2 subunits. Detects stalled/collided 70S ribosomes which it binds and splits by an ATP-hydrolysis driven conformational change. Acts upstream of the ribosome quality control system (RQC), a ribosome-associated complex that mediates the extraction of incompletely synthesized nascent chains from stalled ribosomes and their subsequent degradation. Probably generates substrates for RQC. This Exiguobacterium sibiricum (strain DSM 17290 / CCUG 55495 / CIP 109462 / JCM 13490 / 255-15) protein is Endonuclease MutS2.